Consider the following 278-residue polypeptide: Envelope glycoprotein L (278 aa).

A signal peptide spans 1 to 30 (MCRRPDCGFSFSPGPVILLWCCLLLPIVSS). The region spanning 43–256 (VPAECPELTR…DKYYAGLPPE (214 aa)) is the gL betaherpesvirus-type domain. The cysteines at positions 154 and 159 are disulfide-linked.

The protein belongs to the herpesviridae glycoprotein L (gL) family. Betaherpesvirinae gL subfamily. As to quaternary structure, interacts with glycoprotein H (gH); this interaction is necessary for the correct processing and cell surface expression of gH. Forms the envelope pentamer complex (PC) composed of gH, gL, UL128, UL130, and UL131A. The pentamer interacts with host NRP2. Forms the envelope trimer complex composed of gH, gL, and gO. The trimer interacts with host PDGFRA. The trimer also interacts with host EPHA2.

It localises to the virion membrane. Its subcellular location is the host cell membrane. The protein localises to the host Golgi apparatus. It is found in the host trans-Golgi network. Functionally, the heterodimer glycoprotein H-glycoprotein L is required for the fusion of viral and plasma membranes leading to virus entry into the host cell. Acts as a functional inhibitor of gH and maintains gH in an inhibited form. Upon binding to host integrins, gL dissociates from gH leading to activation of the viral fusion glycoproteins gB and gH. In human cytomegalovirus, forms two distincts complexes to mediate viral entry, a trimer and a pentamer at the surface of the virion envelope. The gH-gL-gO trimer is required for infection in fibroblasts by interacting with host PDGFRA, and in glioblastoma cells by interacting with host EPHA2. The gH-gL-UL128-UL130-UL131A pentamer is essential for viral entry in epithelial, endothelial and myeloid cells via interaction with host NRP2. The sequence is that of Envelope glycoprotein L from Homo sapiens (Human).